The following is a 205-amino-acid chain: High frequency lysogenization protein HflD homolog (205 aa).

It belongs to the HflD family.

The protein resides in the cytoplasm. It is found in the cell inner membrane. The chain is High frequency lysogenization protein HflD homolog from Shewanella baltica (strain OS155 / ATCC BAA-1091).